Reading from the N-terminus, the 677-residue chain is Methionine--tRNA ligase (677 aa).

The 'HIGH' region signature appears at 15-25; the sequence is PYANGSIHLGH. Zn(2+) contacts are provided by cysteine 146, cysteine 149, cysteine 159, and cysteine 162. The 'KMSKS' region motif lies at 333-337; the sequence is KMSKS. Residue lysine 336 participates in ATP binding. The tRNA-binding domain maps to 575-677; the sequence is DFAKIDLRVA…DGAKPGQQVK (103 aa).

It belongs to the class-I aminoacyl-tRNA synthetase family. MetG type 1 subfamily. As to quaternary structure, homodimer. It depends on Zn(2+) as a cofactor.

It localises to the cytoplasm. It carries out the reaction tRNA(Met) + L-methionine + ATP = L-methionyl-tRNA(Met) + AMP + diphosphate. Functionally, is required not only for elongation of protein synthesis but also for the initiation of all mRNA translation through initiator tRNA(fMet) aminoacylation. The sequence is that of Methionine--tRNA ligase from Salmonella paratyphi B (strain ATCC BAA-1250 / SPB7).